Here is a 223-residue protein sequence, read N- to C-terminus: Ribosomal RNA small subunit methyltransferase G (223 aa).

Residues Gly-84, Leu-89, 135 to 136, and Arg-150 each bind S-adenosyl-L-methionine; that span reads VE.

The protein belongs to the methyltransferase superfamily. RNA methyltransferase RsmG family.

It is found in the cytoplasm. It carries out the reaction guanosine(527) in 16S rRNA + S-adenosyl-L-methionine = N(7)-methylguanosine(527) in 16S rRNA + S-adenosyl-L-homocysteine. Its function is as follows. Specifically methylates the N7 position of guanine in position 527 of 16S rRNA. The chain is Ribosomal RNA small subunit methyltransferase G from Saccharophagus degradans (strain 2-40 / ATCC 43961 / DSM 17024).